The following is a 79-amino-acid chain: Ixosin (79 aa).

Positions 1-56 (MSAHKVQIGLSSGQFRVALQVPSVRLKGLGSFHTGSIVLPSQGSLREDQISLHNQD) are cleaved as a propeptide — removed in mature form.

Its function is as follows. Has antifungal activity against C.albicans. Has antibacterial activity against the Gram-positive bacterium S.aureus and the Gram-negative bacterium E.coli. Lacks hemolytic activity against rabbit erythrocytes. The protein is Ixosin of Ixodes sinensis (Hard tick).